The chain runs to 138 residues: Basic phospholipase A2 homolog 7 (138 aa).

The signal sequence occupies residues 1–16; sequence MRTLWLMAVLLVGVEG. Intrachain disulfides connect Cys-42–Cys-131, Cys-44–Cys-60, Cys-59–Cys-111, Cys-65–Cys-138, Cys-66–Cys-104, and Cys-91–Cys-102. The tract at residues 121–133 is important for membrane-damaging activities in eukaryotes and bacteria; heparin-binding; it reads KKKKINLKLFCKK.

It belongs to the phospholipase A2 family. Group II subfamily. K49 sub-subfamily. In terms of tissue distribution, expressed by the venom gland.

It localises to the secreted. In terms of biological role, snake venom phospholipase A2 homolog that lacks enzymatic activity. Is myotoxic and displays edema-inducing activities. A model of myotoxic mechanism has been proposed: an apo Lys49-PLA2 is activated by the entrance of a hydrophobic molecule (e.g. fatty acid) at the hydrophobic channel of the protein leading to a reorientation of a monomer. This reorientation causes a transition between 'inactive' to 'active' states, causing alignment of C-terminal and membrane-docking sites (MDoS) side-by-side and putting the membrane-disruption sites (MDiS) in the same plane, exposed to solvent and in a symmetric position for both monomers. The MDoS region stabilizes the toxin on membrane by the interaction of charged residues with phospholipid head groups. Subsequently, the MDiS region destabilizes the membrane with penetration of hydrophobic residues. This insertion causes a disorganization of the membrane, allowing an uncontrolled influx of ions (i.e. calcium and sodium), and eventually triggering irreversible intracellular alterations and cell death. In Craspedocephalus gramineus (Bamboo pit viper), this protein is Basic phospholipase A2 homolog 7.